Consider the following 414-residue polypeptide: Cytosolic-abundant heat soluble protein 89226 (414 aa).

Basic and acidic residues-rich tracts occupy residues 27–45 and 69–84; these read IGED…DKRP and AGQR…ERLR. The segment at 27–155 is disordered; it reads IGEDRGKEDP…SNPGMNNGMT (129 aa). 2 stretches are compositionally biased toward low complexity: residues 86–101 and 120–134; these read SRSS…VEPS and SSNR…SSSD. A compositionally biased stretch (polar residues) spans 142–155; it reads ASRNSNPGMNNGMT. CAHS motif regions lie at residues 305–323 and 342–360; these read YRNA…LERQ and QQQE…LEQE. Residues 341-376 adopt a coiled-coil conformation; that stretch reads RQQQEIRLEAEYAMRALEQERVNARAALDQAMASTN. Residues 388–405 are compositionally biased toward polar residues; it reads THSQGRVTTTSESRTSQA. A disordered region spans residues 388-414; the sequence is THSQGRVTTTSESRTSQARGPATAAVI.

This sequence belongs to the Cytosolic-abundant heat soluble protein (CAHS) family.

Its subcellular location is the cytoplasm. Functionally, CAHS proteins are cytosolic heat soluble proteins that seem to contribute to the anhydrobiosis in tardigrades, but their specific mechanisms are yet to be identified. It is possible that protection during anhydrobiosis might occur via the stabilization of vitrifying small molecules such as sugars, but not via the direct glass transition of CAHS proteins themselves. In Hypsibius exemplaris (Freshwater tardigrade), this protein is Cytosolic-abundant heat soluble protein 89226.